We begin with the raw amino-acid sequence, 33 residues long: Neutrophil defensin 3 (33 aa).

Cystine bridges form between C3–C31, C5–C20, and C10–C30.

This sequence belongs to the alpha-defensin family.

The protein resides in the secreted. Anti-fungal and bactericidal activity, greater against Gram-positive bacteria. In Mesocricetus auratus (Golden hamster), this protein is Neutrophil defensin 3.